Here is a 482-residue protein sequence, read N- to C-terminus: BEL1-like homeodomain protein 7 (482 aa).

Positions 118–134 (SKYLKAAQELLDETVNV) are SR/KY domain. The tract at residues 167–238 (ERQELQSKLS…CLRDAISGQI (72 aa)) is BELL domain. The segment at residues 285–347 (TWRPQRGLPD…NARVRLWKPM (63 aa)) is a DNA-binding region (homeobox). Positions 358–401 (DALQENDPNQSSENTPEITEIQELQTESSSNNGHVPGVASSSMR) are disordered. The segment covering 363-401 (NDPNQSSENTPEITEIQELQTESSSNNGHVPGVASSSMR) has biased composition (polar residues).

It belongs to the TALE/BELL homeobox family. May form heterodimeric complexes with TALE/KNOX proteins.

Its subcellular location is the nucleus. The polypeptide is BEL1-like homeodomain protein 7 (BLH7) (Arabidopsis thaliana (Mouse-ear cress)).